Reading from the N-terminus, the 596-residue chain is Isocitrate dehydrogenase kinase/phosphatase (596 aa).

ATP is bound by residues 316 to 322 (APGIRGM) and K337. D372 is a catalytic residue.

Belongs to the AceK family.

It is found in the cytoplasm. The enzyme catalyses L-seryl-[isocitrate dehydrogenase] + ATP = O-phospho-L-seryl-[isocitrate dehydrogenase] + ADP + H(+). Bifunctional enzyme which can phosphorylate or dephosphorylate isocitrate dehydrogenase (IDH) on a specific serine residue. This is a regulatory mechanism which enables bacteria to bypass the Krebs cycle via the glyoxylate shunt in response to the source of carbon. When bacteria are grown on glucose, IDH is fully active and unphosphorylated, but when grown on acetate or ethanol, the activity of IDH declines drastically concomitant with its phosphorylation. In Cronobacter sakazakii (strain ATCC BAA-894) (Enterobacter sakazakii), this protein is Isocitrate dehydrogenase kinase/phosphatase.